Consider the following 229-residue polypeptide: MLSSGQSESLNQPMRMVICCLLLSTGLLAAVPSPAEQNALPATERQVEEVVTRLTGIMTTTQQAQSDAARPDVRMTTCSVQLEGDKSKAIYLYQEQTMSNNLGAPYRQRLLRIAASADGRAVESAGFKFVEAKPLAGLCAKPAAERLIAPMALDGDPTCTVRLVQAGDKYMGTTPEGGCQSNVRGAARITNEITLYKEGMDTRDRGFDAQGNQVWGAKEEPYRFRRLTP.

This sequence belongs to the CpcT/CpeT biliprotein lyase family.

In terms of biological role, covalently attaches a chromophore to Cys residue(s) of phycobiliproteins. The polypeptide is Chromophore lyase CpcT/CpeT 1 (Gloeobacter violaceus (strain ATCC 29082 / PCC 7421)).